The primary structure comprises 398 residues: uncharacterized protein (398 aa).

The next 2 helical transmembrane spans lie at 31 to 51 (VVFS…CLLF) and 56 to 76 (AFIT…FFGC).

It belongs to the chlamydial CPn_0129/CT_036/TC_0306 family.

It is found in the cell membrane. This is an uncharacterized protein from Chlamydia muridarum (strain MoPn / Nigg).